The chain runs to 1104 residues: Carbamoyl phosphate synthase large chain (1104 aa).

A carboxyphosphate synthetic domain region spans residues 1 to 402 (MPRRTDLKSV…ALQKALRSTE (402 aa)). ATP-binding residues include Arg-129, Arg-169, Gly-175, Gly-176, Glu-208, Ile-210, Glu-215, Gly-241, Val-242, His-243, Gln-285, and Glu-299. Positions 133-328 (KGVVERCGAE…IAKIAARLAV (196 aa)) constitute an ATP-grasp 1 domain. Mg(2+)-binding residues include Gln-285, Glu-299, and Asn-301. Mn(2+) contacts are provided by Gln-285, Glu-299, and Asn-301. Positions 403-547 (KRGATFSWAG…YSSYDEEDET (145 aa)) are oligomerization domain. The segment at 548-948 (RPREKAAIVI…AFGKSQTAAY (401 aa)) is carbamoyl phosphate synthetic domain. The region spanning 676–867 (GQVLERAGLV…LAKAAARLMA (192 aa)) is the ATP-grasp 2 domain. Residues Arg-712, Arg-751, Leu-753, Glu-758, Gly-783, Ile-784, His-785, Ser-786, Gln-826, and Glu-838 each coordinate ATP. Positions 826, 838, and 840 each coordinate Mg(2+). Residues Gln-826, Glu-838, and Asn-840 each coordinate Mn(2+). The MGS-like domain occupies 949–1099 (GGLPTAGTAF…QEHTARLNAA (151 aa)). Positions 949–1104 (GGLPTAGTAF…RLNAAWEGRA (156 aa)) are allosteric domain.

Belongs to the CarB family. As to quaternary structure, composed of two chains; the small (or glutamine) chain promotes the hydrolysis of glutamine to ammonia, which is used by the large (or ammonia) chain to synthesize carbamoyl phosphate. Tetramer of heterodimers (alpha,beta)4. It depends on Mg(2+) as a cofactor. Requires Mn(2+) as cofactor.

It carries out the reaction hydrogencarbonate + L-glutamine + 2 ATP + H2O = carbamoyl phosphate + L-glutamate + 2 ADP + phosphate + 2 H(+). The catalysed reaction is hydrogencarbonate + NH4(+) + 2 ATP = carbamoyl phosphate + 2 ADP + phosphate + 2 H(+). The protein operates within amino-acid biosynthesis; L-arginine biosynthesis; carbamoyl phosphate from bicarbonate: step 1/1. Its pathway is pyrimidine metabolism; UMP biosynthesis via de novo pathway; (S)-dihydroorotate from bicarbonate: step 1/3. In terms of biological role, large subunit of the glutamine-dependent carbamoyl phosphate synthetase (CPSase). CPSase catalyzes the formation of carbamoyl phosphate from the ammonia moiety of glutamine, carbonate, and phosphate donated by ATP, constituting the first step of 2 biosynthetic pathways, one leading to arginine and/or urea and the other to pyrimidine nucleotides. The large subunit (synthetase) binds the substrates ammonia (free or transferred from glutamine from the small subunit), hydrogencarbonate and ATP and carries out an ATP-coupled ligase reaction, activating hydrogencarbonate by forming carboxy phosphate which reacts with ammonia to form carbamoyl phosphate. The sequence is that of Carbamoyl phosphate synthase large chain from Kineococcus radiotolerans (strain ATCC BAA-149 / DSM 14245 / SRS30216).